A 72-amino-acid chain; its full sequence is UPF0729 protein C18orf32 homolog (72 aa).

Residues 1 to 33 form a necessary for its localzation to the endoplasmic reticulum and lipid droplets region; that stretch reads MVCIPCIVIPVLLWIFKKFLEPYIYPVVSRIWP. The disordered stretch occupies residues 36-72; sequence AVQQSGDKNMSKVDCKGAGTNGLPTKGPTEVSDKKKD.

It belongs to the UPF0729 family. In terms of assembly, interacts with DERL1 and AMFR. Undergoes ER-associated degradation (ERAD).

It is found in the endoplasmic reticulum. The protein localises to the lipid droplet. May activate the NF-kappa-B signaling pathway. This Mus musculus (Mouse) protein is UPF0729 protein C18orf32 homolog.